The following is a 237-amino-acid chain: Oligoribonuclease, mitochondrial (237 aa).

The N-terminal 25 residues, 1-25 (MLGGSLGSRLLRGVGGSHGRFGARG), are a transit peptide targeting the mitochondrion. The Exonuclease domain maps to 43–207 (MVWVDLEMTG…DDISESIKEL (165 aa)). Residues aspartate 47 and glutamate 49 each coordinate Mg(2+). Position 92 is a phosphoserine (serine 92). Position 122 is a phosphotyrosine (tyrosine 122). Mg(2+) is bound at residue aspartate 147. Lysine 173 carries the post-translational modification N6-acetyllysine. Residue histidine 194 is part of the active site. Mg(2+) is bound at residue aspartate 199.

Belongs to the oligoribonuclease family. In terms of assembly, homodimer. Homotetramer. Mn(2+) is required as a cofactor. Requires Mg(2+) as cofactor. In terms of tissue distribution, highly expressed in the heart and at lower levels in the lymph nodes, brain, lung, liver, spleen and thymus.

It is found in the mitochondrion intermembrane space. Its subcellular location is the mitochondrion matrix. The protein localises to the mitochondrion. It localises to the cytoplasm. The protein resides in the nucleus. Its activity is regulated as follows. Inhibited by adenosine 3',5'-bisphosphate. Functionally, 3'-to-5'exoribonuclease that preferentially degrades DNA and RNA oligonucleotides composed of only two nucleotides. Binds and degrades longer oligonucleotides with a lower affinity. Plays dual roles in mitochondria, scavenging nanoRNAs (small RNA oligonucleotides of &lt;5 nucleotides) that are produced by the degradosome and clearing short RNAs that are generated by RNA processing. Essential for correct initiation of mitochondrial transcription, degrading mitochondrial RNA dinucleotides to prevent RNA-primed transcription at non-canonical sites in the mitochondrial genome. Essential for embryonic development. In terms of biological role, 3'-to-5'exoribonuclease that preferentially degrades DNA and RNA oligonucleotides composed of only two nucleotides. The sequence is that of Oligoribonuclease, mitochondrial (REXO2) from Homo sapiens (Human).